The chain runs to 561 residues: Transcription factor Clamp (561 aa).

The C2H2-type 1 zinc-finger motif lies at 127 to 149 (FKCDVCSDMFPHLALLNAHKRMH). 4 residues coordinate Zn(2+): C129, C132, H145, and H149. Residues 290–315 (TGGTTPKREASSGSGHHPVKKRNSQQ) form a disordered region. 6 consecutive C2H2-type zinc fingers follow at residues 360–382 (FSCN…KKLH), 388–410 (YKCS…ARIH), 416–438 (YKCQ…ERTH), 444–466 (YVCG…RRIH), 472–494 (YKCE…AKVH), and 500–522 (YKCE…RGIH).

In terms of assembly, homodimer. Interacts with msl-2; promoting recruitment of the male-specific lethal (MSL) histone acetyltransferase complex to chromatin. Interacts with Nelf-A. Interacts with NELF-B.

Its subcellular location is the nucleus. The protein localises to the chromosome. Its function is as follows. Transcription factor involved in X-chromosome dosage compensation in males, the process by which transcription of the single X chromosome in the male is elevated. Binds to the DNA sequence (GA)n. Clamp-binding promotes nucleosome depletion and chromatin accessibility, thereby allowing access to other transcription factors. Specifically binds to cis-acting elements on the X-chromosome named chromatin entry sites and promotes recruitment of the male-specific lethal (MSL) histone acetyltransferase complex, which associates with actively transcribed genes on the male X-chromosome to upregulate their expression. Mechanistically, acts by promoting chromatin accessibility at chromatin entry sites, facilitating DNA-binding of msl-2, followed by MSL complex recruitment. In addition to dosage compensation, also involved in zygotic genome activation (ZGA), a critical event in early embryonic development during which the developmental control passes from maternally provided mRNAs to the expression of the zygotic genome after fertilization. Maternally-provided protein cooperates with Zelda (zld) to activate zygotic transcription by increasing chromatin accessibility at promoters of specific genes and facilitate zld occupancy at a subset of key embryonic promoters. Also acts as an activator of gypsy chromatin insulator function by promoting binding of Cp190 to chromatin. In Drosophila melanogaster (Fruit fly), this protein is Transcription factor Clamp.